The following is a 323-amino-acid chain: Malate dehydrogenase (323 aa).

Position 11–17 (11–17 (GAAGQIA)) interacts with NAD(+). The substrate site is built by Arg-92 and Arg-98. NAD(+)-binding positions include Asn-105, Gln-112, and 129-131 (VGN). Residues Asn-131 and Arg-162 each contribute to the substrate site. His-187 (proton acceptor) is an active-site residue.

Belongs to the LDH/MDH superfamily. MDH type 2 family.

The catalysed reaction is (S)-malate + NAD(+) = oxaloacetate + NADH + H(+). Its function is as follows. Catalyzes the reversible oxidation of malate to oxaloacetate. The sequence is that of Malate dehydrogenase from Corynebacterium efficiens (strain DSM 44549 / YS-314 / AJ 12310 / JCM 11189 / NBRC 100395).